The primary structure comprises 211 residues: Probable nicotinate-nucleotide adenylyltransferase (211 aa).

Belongs to the NadD family.

The catalysed reaction is nicotinate beta-D-ribonucleotide + ATP + H(+) = deamido-NAD(+) + diphosphate. Its pathway is cofactor biosynthesis; NAD(+) biosynthesis; deamido-NAD(+) from nicotinate D-ribonucleotide: step 1/1. Functionally, catalyzes the reversible adenylation of nicotinate mononucleotide (NaMN) to nicotinic acid adenine dinucleotide (NaAD). This Gemmatimonas aurantiaca (strain DSM 14586 / JCM 11422 / NBRC 100505 / T-27) protein is Probable nicotinate-nucleotide adenylyltransferase.